The sequence spans 542 residues: Glutamyl-tRNA reductase 2, chloroplastic (542 aa).

Substrate contacts are provided by residues 142 to 145, Ser-202, 207 to 209, and Gln-213; these read TCNR and EGQ. Cys-143 acts as the Nucleophile in catalysis. Residue 284-289 coordinates NADP(+); sequence GAGKMG.

The protein belongs to the glutamyl-tRNA reductase family. Found in all tissues examined.

It localises to the plastid. The protein resides in the chloroplast. The enzyme catalyses (S)-4-amino-5-oxopentanoate + tRNA(Glu) + NADP(+) = L-glutamyl-tRNA(Glu) + NADPH + H(+). Its pathway is porphyrin-containing compound metabolism; protoporphyrin-IX biosynthesis; 5-aminolevulinate from L-glutamyl-tRNA(Glu): step 1/2. Functionally, catalyzes the NADPH-dependent reduction of glutamyl-tRNA(Glu) to glutamate 1-semialdehyde (GSA). This chain is Glutamyl-tRNA reductase 2, chloroplastic (HEMA2), found in Cucumis sativus (Cucumber).